The following is a 276-amino-acid chain: Homeobox-leucine zipper protein HOX22 (276 aa).

Positions 70–130 form a DNA-binding region, homeobox; the sequence is AGERKRRFTE…NKRARWRSKQ (61 aa). The leucine-zipper stretch occupies residues 129–173; that stretch reads KQLEHDYAALRSKYDALHSRVESLKQEKLALTVQLHELRERLRER. Positions 170–212 are disordered; that stretch reads LREREERSGNGGAATTAASSSSCNGSGSEEVDDDDDKRNAAAG. The span at 182 to 197 shows a compositional bias: low complexity; it reads AATTAASSSSCNGSGS.

This sequence belongs to the HD-ZIP homeobox family. Class I subfamily. In terms of tissue distribution, expressed in seedlings, roots, stems, leaf sheaths and blades and panicles.

It is found in the nucleus. Its function is as follows. Probable transcription factor. This is Homeobox-leucine zipper protein HOX22 (HOX22) from Oryza sativa subsp. japonica (Rice).